Consider the following 512-residue polypeptide: Replication initiation protein (512 aa).

In terms of biological role, essential for replication. Binds specifically to a 60-bp region corresponding to the putative origin of replication of pXO2. Also binds nonspecifically to single-stranded DNA with lower affinity. This Bacillus anthracis protein is Replication initiation protein (repS).